Reading from the N-terminus, the 228-residue chain is ATP-dependent dethiobiotin synthetase BioD (228 aa).

12–17 (EIGKTT) is a binding site for ATP. Threonine 16 serves as a coordination point for Mg(2+). Lysine 37 is an active-site residue. Serine 41 lines the substrate pocket. Residues aspartate 54, 116–119 (EGAG), and 205–207 (PRL) contribute to the ATP site. Residues aspartate 54 and glutamate 116 each coordinate Mg(2+).

It belongs to the dethiobiotin synthetase family. In terms of assembly, homodimer. It depends on Mg(2+) as a cofactor.

The protein localises to the cytoplasm. It catalyses the reaction (7R,8S)-7,8-diammoniononanoate + CO2 + ATP = (4R,5S)-dethiobiotin + ADP + phosphate + 3 H(+). Its pathway is cofactor biosynthesis; biotin biosynthesis; biotin from 7,8-diaminononanoate: step 1/2. Catalyzes a mechanistically unusual reaction, the ATP-dependent insertion of CO2 between the N7 and N8 nitrogen atoms of 7,8-diaminopelargonic acid (DAPA, also called 7,8-diammoniononanoate) to form a ureido ring. This chain is ATP-dependent dethiobiotin synthetase BioD, found in Pseudomonas paraeruginosa (strain DSM 24068 / PA7) (Pseudomonas aeruginosa (strain PA7)).